Here is a 436-residue protein sequence, read N- to C-terminus: Serine--tRNA ligase (436 aa).

Residues 43–55 (TKSEQLKQKRNEV) are compositionally biased toward basic and acidic residues. Positions 43 to 68 (TKSEQLKQKRNEVSDQIAQAKRNKED) are disordered. 237–239 (TAE) provides a ligand contact to L-serine. An ATP-binding site is contributed by 268–270 (RSE). Glu291 provides a ligand contact to L-serine. 355–358 (EISS) is a binding site for ATP. Ser390 lines the L-serine pocket.

It belongs to the class-II aminoacyl-tRNA synthetase family. Type-1 seryl-tRNA synthetase subfamily. In terms of assembly, homodimer. The tRNA molecule binds across the dimer.

It localises to the cytoplasm. It carries out the reaction tRNA(Ser) + L-serine + ATP = L-seryl-tRNA(Ser) + AMP + diphosphate + H(+). The enzyme catalyses tRNA(Sec) + L-serine + ATP = L-seryl-tRNA(Sec) + AMP + diphosphate + H(+). It participates in aminoacyl-tRNA biosynthesis; selenocysteinyl-tRNA(Sec) biosynthesis; L-seryl-tRNA(Sec) from L-serine and tRNA(Sec): step 1/1. Its function is as follows. Catalyzes the attachment of serine to tRNA(Ser). Is also able to aminoacylate tRNA(Sec) with serine, to form the misacylated tRNA L-seryl-tRNA(Sec), which will be further converted into selenocysteinyl-tRNA(Sec). The polypeptide is Serine--tRNA ligase (Lactobacillus johnsonii (strain CNCM I-12250 / La1 / NCC 533)).